Consider the following 322-residue polypeptide: Ribonuclease Z (322 aa).

Zn(2+) contacts are provided by His-60, His-62, Asp-64, His-65, His-140, Asp-210, and His-270. The active-site Proton acceptor is Asp-64.

It belongs to the RNase Z family. Homodimer. The cofactor is Zn(2+).

It carries out the reaction Endonucleolytic cleavage of RNA, removing extra 3' nucleotides from tRNA precursor, generating 3' termini of tRNAs. A 3'-hydroxy group is left at the tRNA terminus and a 5'-phosphoryl group is left at the trailer molecule.. Functionally, zinc phosphodiesterase, which displays some tRNA 3'-processing endonuclease activity. Probably involved in tRNA maturation, by removing a 3'-trailer from precursor tRNA. This chain is Ribonuclease Z, found in Methanococcus aeolicus (strain ATCC BAA-1280 / DSM 17508 / OCM 812 / Nankai-3).